The sequence spans 822 residues: Calpain-3 (822 aa).

The interval 1 to 36 (MPTVISASVAPRTGAEPMSPGPIAQAAQDKGTEAGG) is disordered. The 345-residue stretch at 74 to 418 (LFVDPEFPPD…FTKLEICNLT (345 aa)) folds into the Calpain catalytic domain. Residues C129, H335, and N359 contribute to the active site. Residues 419 to 587 (ADALESDKLQ…KRNLSEEVEN (169 aa)) are domain III. Positions 588-650 (TISVDRPVKK…EPGNTDQESE (63 aa)) are linker. The tract at residues 604–652 (IFVSDRANSNKELGVDQETEEGKDNTSPDKQAKSPQLEPGNTDQESEEQ) is disordered. Positions 623-635 (EEGKDNTSPDKQA) are enriched in basic and acidic residues. 4 EF-hand domains span residues 650-684 (EEQRQFRNIFRQIAGDDMEICADELKNVLNRVVNK), 693-726 (FTLESCRSMIALMDTDGSGRLNLQEFHHLWKKIK), 723-758 (KKIKTWQKIFKHYDTDQSGTINSYEMRNAVKDAGFH), and 788-822 (VRLEGMFRAFNAFDKDGDGIIKLNVLEWLQLTMYA). A domain IV region spans residues 651 to 822 (EQRQFRNIFR…LEWLQLTMYA (172 aa)). Positions 663, 666, 668, 673, 706, 708, 710, 712, 717, 736, 738, 740, 742, 747, 801, 803, 805, and 807 each coordinate Ca(2+).

The protein belongs to the peptidase C2 family. As to quaternary structure, homodimer; via EF-hand domain 4. Interacts with TTN/titin. Interacts with CMYA5; this interaction, which results in CMYA5 proteolysis, may protect CAPN3 from autolysis. Interacts with SIMC1. Interacts with UTP25; the interaction is required for CAPN3 translocation to the nucleolus. As to expression, skeletal muscle.

It localises to the cytoplasm. Its subcellular location is the nucleus. It is found in the nucleolus. The catalysed reaction is Broad endopeptidase activity.. Activated by micromolar concentrations of calcium and inhibited by calpastatin. Functionally, calcium-regulated non-lysosomal thiol-protease. Proteolytically cleaves CTBP1. Mediates, with UTP25, the proteasome-independent degradation of p53/TP53. The protein is Calpain-3 (CAPN3) of Bos taurus (Bovine).